Consider the following 244-residue polypeptide: 3-deoxy-manno-octulosonate cytidylyltransferase (244 aa).

Belongs to the KdsB family.

It localises to the cytoplasm. The catalysed reaction is 3-deoxy-alpha-D-manno-oct-2-ulosonate + CTP = CMP-3-deoxy-beta-D-manno-octulosonate + diphosphate. It functions in the pathway nucleotide-sugar biosynthesis; CMP-3-deoxy-D-manno-octulosonate biosynthesis; CMP-3-deoxy-D-manno-octulosonate from 3-deoxy-D-manno-octulosonate and CTP: step 1/1. Its pathway is bacterial outer membrane biogenesis; lipopolysaccharide biosynthesis. Activates KDO (a required 8-carbon sugar) for incorporation into bacterial lipopolysaccharide in Gram-negative bacteria. The chain is 3-deoxy-manno-octulosonate cytidylyltransferase from Dichelobacter nodosus (strain VCS1703A).